Here is a 262-residue protein sequence, read N- to C-terminus: Protein BREAKING OF ASYMMETRY IN THE STOMATAL LINEAGE (262 aa).

2 disordered regions span residues 32 to 107 (DEDG…QPPV) and 129 to 222 (KEGK…GRGS). Residues 37–47 (NNNGNTTNNNN) show a composition bias toward low complexity. Short sequence motifs (nuclear localization signal) lie at residues 50-57 (FKRIKRKI) and 61-68 (KKKRSERK). The span at 51–66 (KRIKRKIKSTKKKRSE) shows a compositional bias: basic residues. Ser-72, Ser-85, Ser-86, and Ser-87 each carry phosphoserine; by ASK7. The span at 84 to 95 (RSSSVSPTTSGS) shows a compositional bias: low complexity. A Phosphoserine; by ASK7 and MPK6 modification is found at Ser-89. A Phosphothreonine; by ASK7 modification is found at Thr-91. Residues 129-146 (KEGKQEKKETESSSEKSP) are compositionally biased toward basic and acidic residues. A phosphoserine; by MPK6 mark is found at Ser-145 and Ser-168. Polar residues predominate over residues 179 to 189 (NDNTSCQGTKD). Over residues 190–200 (VSSDVTERTKE) the composition is skewed to basic and acidic residues. The tract at residues 222–262 (SFAFPILGVEWMGSPAKMPESDDLSPKKQKPVALGFQCCRF) is required for polarization at the cell cortex. The FxFP, required for cortical polarity formation motif lies at 223–226 (FAFP). Residues Ser-235 and Ser-246 each carry the phosphoserine; by MPK6 modification.

As to quaternary structure, component of a complex made of POLAR, BASL, ASK7/BIN2 and ASK3/SK12. Interacts with POLAR, ASK7/BIN2 and ASK3/SK12. Binds to YDA when phosphorylated. Interacts with MPK6, MPK3 and MKK5. In terms of processing, cortical localization of BASL requires phosphorylation mediated by MPK3 and MPK6. Phosphorylation promotes YDA binding. Phosphorylation status modulates subcellular mobility. As to expression, mostly expressed in stomatal lineage cells including asymmetrically dividing meristemoid mother cells (MMCs) and meristemoids, and, at lower levels, in their sisters. Also present in vasculature. Expressed at low levels in the epidermal pavement cells.

It localises to the cytoplasm. Its subcellular location is the nucleus. It is found in the cell cortex. The protein resides in the cell membrane. Regulates asymmetric cell division (ACD), especially in stomatal-lineage cells, probably by modulating accumulation and subcellular polarization of POLAR and SPCH. Mediates an attenuation of MAPK signaling upon polarization of POLAR and ASK7/BIN2 in stomatal lineage ground cells (SLGCs) undergoing ACD, and relieves BIN2 inhibition of SPCH in the nucleus. When phosphorylated, functions as a scaffold and recruits the MAPKKK YODA, MPK3 and MPK6 to spatially reorganize the MAPK signaling pathway at the cortex of cells undergoing ACD. Cortical polarization leads to elevated nuclear MPK6 signaling and lowered SPCH abundance in one of the two daughter cells, thus differentiating the two daughter cells after ACD. This chain is Protein BREAKING OF ASYMMETRY IN THE STOMATAL LINEAGE, found in Arabidopsis thaliana (Mouse-ear cress).